We begin with the raw amino-acid sequence, 367 residues long: Cyclin-dependent kinase 5 activator 2 (367 aa).

The span at 1–11 shows a compositional bias: polar residues; it reads MGTVLSLSPAS. Disordered regions lie at residues 1-56, 72-98, 131-175, and 329-367; these read MGTV…RLKR, ASAKKKKGSKKVTPKPASTGPDPLVQQ, AAAT…GSPR, and GEAAASGGGPPSGGAPAASSAARDSCAAGTKHWTMNLDR. Gly-2 is lipidated: N-myristoyl glycine. Over residues 74 to 84 the composition is skewed to basic residues; sequence AKKKKGSKKVT. Thr-84 is subject to Phosphothreonine. A compositionally biased stretch (low complexity) spans 131–148; that stretch reads AAATCEPPSGGSAAAQPP. Residues 154–171 are compositionally biased toward pro residues; that stretch reads KPPPPPPPAPQVAPPVPG. Residues 342–357 show a composition bias toward low complexity; that stretch reads GAPAASSAARDSCAAG.

It belongs to the cyclin-dependent kinase 5 activator family. Heterodimer of a catalytic subunit and a regulatory subunit. Myristoylated. The Gly-2-Ala mutant is absent of the cell periphery, suggesting that a proper myristoylation signal is essential for the proper distribution of CDK5R2 (p39). Brain and neuron specific.

It is found in the cell membrane. Functionally, activator of CDK5/TPKII. In Homo sapiens (Human), this protein is Cyclin-dependent kinase 5 activator 2 (CDK5R2).